The sequence spans 468 residues: DNA polymerase IV 1 (468 aa).

Positions 6-188 (VLHLDMDAFF…LPVRRLWGIG (183 aa)) constitute a UmuC domain. Residues Asp-10 and Asp-105 each coordinate Mg(2+). Glu-106 is an active-site residue.

Belongs to the DNA polymerase type-Y family. As to quaternary structure, monomer. It depends on Mg(2+) as a cofactor.

The protein localises to the cytoplasm. It catalyses the reaction DNA(n) + a 2'-deoxyribonucleoside 5'-triphosphate = DNA(n+1) + diphosphate. In terms of biological role, poorly processive, error-prone DNA polymerase involved in untargeted mutagenesis. Copies undamaged DNA at stalled replication forks, which arise in vivo from mismatched or misaligned primer ends. These misaligned primers can be extended by PolIV. Exhibits no 3'-5' exonuclease (proofreading) activity. May be involved in translesional synthesis, in conjunction with the beta clamp from PolIII. In Mycobacterium tuberculosis (strain CDC 1551 / Oshkosh), this protein is DNA polymerase IV 1 (dinB1).